Here is a 200-residue protein sequence, read N- to C-terminus: HTH-type transcriptional repressor KstR2 (200 aa).

In terms of domain architecture, HTH tetR-type spans 9-69 (NSRRGELLEL…ELLRGFLDWL (61 aa)). Residues 32–51 (TVRDIADGAGILSGSLYHHF) constitute a DNA-binding region (H-T-H motif).

As to quaternary structure, homodimer.

In terms of biological role, controls the expression of a small regulon that may play a role in the utilization of cholesterol. The protein is HTH-type transcriptional repressor KstR2 (kstR2) of Mycobacterium tuberculosis (strain CDC 1551 / Oshkosh).